A 103-amino-acid polypeptide reads, in one-letter code: Small ribosomal subunit protein uS10 (103 aa).

Belongs to the universal ribosomal protein uS10 family. As to quaternary structure, part of the 30S ribosomal subunit.

Involved in the binding of tRNA to the ribosomes. The sequence is that of Small ribosomal subunit protein uS10 from Persephonella marina (strain DSM 14350 / EX-H1).